A 285-amino-acid chain; its full sequence is Bifunctional protein FolD (285 aa).

NADP(+) is bound by residues 166–168 (GAS) and I232.

It belongs to the tetrahydrofolate dehydrogenase/cyclohydrolase family. Homodimer.

The enzyme catalyses (6R)-5,10-methylene-5,6,7,8-tetrahydrofolate + NADP(+) = (6R)-5,10-methenyltetrahydrofolate + NADPH. It catalyses the reaction (6R)-5,10-methenyltetrahydrofolate + H2O = (6R)-10-formyltetrahydrofolate + H(+). Its pathway is one-carbon metabolism; tetrahydrofolate interconversion. Functionally, catalyzes the oxidation of 5,10-methylenetetrahydrofolate to 5,10-methenyltetrahydrofolate and then the hydrolysis of 5,10-methenyltetrahydrofolate to 10-formyltetrahydrofolate. The chain is Bifunctional protein FolD from Photobacterium profundum (strain SS9).